The primary structure comprises 135 residues: ATP synthase epsilon chain (135 aa).

Belongs to the ATPase epsilon chain family. In terms of assembly, F-type ATPases have 2 components, CF(1) - the catalytic core - and CF(0) - the membrane proton channel. CF(1) has five subunits: alpha(3), beta(3), gamma(1), delta(1), epsilon(1). CF(0) has three main subunits: a, b and c.

The protein localises to the cell inner membrane. In terms of biological role, produces ATP from ADP in the presence of a proton gradient across the membrane. This chain is ATP synthase epsilon chain, found in Rhodopseudomonas palustris (strain BisB18).